We begin with the raw amino-acid sequence, 473 residues long: Probable dipeptidase (473 aa).

Residue Cys10 is part of the active site.

This sequence belongs to the peptidase C69 family.

It carries out the reaction an L-aminoacyl-L-amino acid + H2O = 2 an L-alpha-amino acid. The sequence is that of Probable dipeptidase from Latilactobacillus sakei (Lactobacillus sakei).